A 38-amino-acid polypeptide reads, in one-letter code: Photosystem II reaction center protein X (38 aa).

A helical transmembrane segment spans residues 9 to 29; that stretch reads IASLTAGALVLSAIGIALIII.

Belongs to the PsbX family. Type 1 subfamily. In terms of assembly, PSII is composed of 1 copy each of membrane proteins PsbA, PsbB, PsbC, PsbD, PsbE, PsbF, PsbH, PsbI, PsbJ, PsbK, PsbL, PsbM, PsbT, PsbX, PsbY, PsbZ, Psb30/Ycf12, at least 3 peripheral proteins of the oxygen-evolving complex and a large number of cofactors. It forms dimeric complexes.

It is found in the plastid. It localises to the chloroplast thylakoid membrane. Functionally, involved in the binding and/or turnover of quinones at the Q(B) site of photosystem II (PSII). PSII is a light-driven water plastoquinone oxidoreductase, using light energy to abstract electrons from H(2)O, generating a proton gradient subsequently used for ATP formation. The chain is Photosystem II reaction center protein X from Thalassiosira pseudonana (Marine diatom).